The following is a 651-amino-acid chain: Bromodomain-containing protein 7 (651 aa).

Disordered regions lie at residues 36–133 and 257–298; these read ELST…EVEQ and KDKV…KKKD. Residues 58–69 show a composition bias toward basic residues; the sequence is HKDRKRKKRKKG. A Nuclear localization signal motif is present at residues 65–96; the sequence is KRKKGEKQVPGEEKEKRKRKVKEDKRKRDREH. Basic and acidic residues predominate over residues 70-105; that stretch reads EKQVPGEEKEKRKRKVKEDKRKRDREHPDSEGEQEL. The region spanning 131–235 is the Bromo domain; that stretch reads VEQTPLQEAL…HSGMKILSQE (105 aa). Over residues 271-298 the composition is skewed to basic and acidic residues; sequence GSGKDKGEPVDGDTKAFKTPNKEHKKKD. The stretch at 533–564 forms a coiled coil; it reads SEEAEIFQRKLDETTKLLRELQDAQNERLSTK.

Its subcellular location is the nucleus. It localises to the chromosome. In terms of biological role, acts both as coactivator and as corepressor. May play a role in chromatin remodeling. Participates in the Wnt signaling pathway. Transcriptional corepressor that down-regulates the expression of target genes. Binds to target promoters, leading to increased histone H3 acetylation. Coactivator for TP53-mediated activation of transcription of a set of target genes. Required for TP53-mediated cell-cycle arrest in response to oncogene activation. Inhibits cell cycle progression from G1 to S phase. The chain is Bromodomain-containing protein 7 (BRD7) from Gallus gallus (Chicken).